A 156-amino-acid polypeptide reads, in one-letter code: Small ribosomal subunit protein uS7 (156 aa).

Belongs to the universal ribosomal protein uS7 family. As to quaternary structure, part of the 30S ribosomal subunit. Contacts proteins S9 and S11.

Functionally, one of the primary rRNA binding proteins, it binds directly to 16S rRNA where it nucleates assembly of the head domain of the 30S subunit. Is located at the subunit interface close to the decoding center, probably blocks exit of the E-site tRNA. This is Small ribosomal subunit protein uS7 from Erythrobacter litoralis (strain HTCC2594).